A 90-amino-acid polypeptide reads, in one-letter code: Small ribosomal subunit protein uS17 (90 aa).

This sequence belongs to the universal ribosomal protein uS17 family. In terms of assembly, part of the 30S ribosomal subunit.

Functionally, one of the primary rRNA binding proteins, it binds specifically to the 5'-end of 16S ribosomal RNA. The sequence is that of Small ribosomal subunit protein uS17 from Burkholderia thailandensis (strain ATCC 700388 / DSM 13276 / CCUG 48851 / CIP 106301 / E264).